We begin with the raw amino-acid sequence, 322 residues long: Acetyl-coenzyme A carboxylase carboxyl transferase subunit alpha (322 aa).

One can recognise a CoA carboxyltransferase C-terminal domain in the interval 39 to 296 (DLTALKKQLI…HSKLVTELNY (258 aa)).

It belongs to the AccA family. In terms of assembly, acetyl-CoA carboxylase is a heterohexamer composed of biotin carboxyl carrier protein (accB), biotin carboxylase (accC) and two subunits each of ACCase subunit alpha (accA) and ACCase subunit beta (accD).

The protein resides in the plastid. It localises to the chloroplast. The catalysed reaction is N(6)-carboxybiotinyl-L-lysyl-[protein] + acetyl-CoA = N(6)-biotinyl-L-lysyl-[protein] + malonyl-CoA. It participates in lipid metabolism; malonyl-CoA biosynthesis; malonyl-CoA from acetyl-CoA: step 1/1. Component of the acetyl coenzyme A carboxylase (ACC) complex. First, biotin carboxylase catalyzes the carboxylation of biotin on its carrier protein (BCCP) and then the CO(2) group is transferred by the carboxyltransferase to acetyl-CoA to form malonyl-CoA. In Antithamnion sp. (Red alga), this protein is Acetyl-coenzyme A carboxylase carboxyl transferase subunit alpha.